The chain runs to 362 residues: Class I histocompatibility antigen, Gogo-B*0102 alpha chain (362 aa).

The signal sequence occupies residues 1–24 (MRVTAPRTLLLLLSAALALTETWA). The alpha-1 stretch occupies residues 25–114 (GSHSMRYFDT…ALRYYNQSEA (90 aa)). Residues 25 to 308 (GSHSMRYFDT…EPSSQSTIPI (284 aa)) lie on the Extracellular side of the membrane. The N-linked (GlcNAc...) asparagine glycan is linked to Asn110. The alpha-2 stretch occupies residues 115–206 (GSHTFQRMFG…ENGRETLQRA (92 aa)). 2 disulfides stabilise this stretch: Cys125-Cys188 and Cys227-Cys283. Residues 207-298 (DTPKTHVTHH…GLPKPLTLRW (92 aa)) form an alpha-3 region. One can recognise an Ig-like C1-type domain in the interval 209–295 (PKTHVTHHPI…QHEGLPKPLT (87 aa)). Residues 299–308 (EPSSQSTIPI) are connecting peptide. A helical transmembrane segment spans residues 309-332 (VGIVAGLAVLAVVVIGAVVTAVIC). Residues 333 to 362 (RRKSSGGKGGSYSQAASSDSAQGSDVSLTA) lie on the Cytoplasmic side of the membrane. The segment at 335–362 (KSSGGKGGSYSQAASSDSAQGSDVSLTA) is disordered. Residues 343–362 (SYSQAASSDSAQGSDVSLTA) are compositionally biased toward low complexity.

This sequence belongs to the MHC class I family. As to quaternary structure, heterodimer of an alpha chain and a beta chain (beta-2-microglobulin).

It localises to the membrane. Its function is as follows. Involved in the presentation of foreign antigens to the immune system. This chain is Class I histocompatibility antigen, Gogo-B*0102 alpha chain, found in Gorilla gorilla gorilla (Western lowland gorilla).